Here is a 340-residue protein sequence, read N- to C-terminus: Central glycolytic genes regulator (340 aa).

A DNA-binding region (H-T-H motif) is located at residues 37–56; sequence RRSLSASLGISERVLRGEVQ. Residues 149-152, R175, Q185, 250-251, E269, and K310 each bind beta-D-fructose 1,6-bisphosphate; these read GGTT and RR.

This sequence belongs to the SorC transcriptional regulatory family. Homotetramer. Binds primarily as a dimer to each half-site of the full-length operator, with much higher affinity for the right site. Then, both dimers interact, bridging the two-half sites of the operator region.

With respect to regulation, stability and function are regulated by the effector molecule fructose-1,6-bisphosphate (FBP). In the presence of glucose, binding of FBP to the low-affinity sugar-binding site of CggR disrupts dimer/dimer bridging interactions and triggers a tetramer to dimer transition, which leaves two physically independent dimers on the target DNA and allows transcription of the downstream coding sequences by the RNA polymerase. In addition, FBP and several other phosphorylated compounds can bind to a high-affinity binding-site and protect CggR against aggregation and proteolysis. Functionally, in the absence of glucose, represses the transcription of the gapA operon, which encodes five key glycolytic enzymes. Binds specifically to the cggR-gapA promoter region and blocks the progression of the RNA polymerase, leading to the arrest of the transcription. This is Central glycolytic genes regulator (cggR) from Bacillus subtilis (strain 168).